The primary structure comprises 1173 residues: DNA polymerase catalytic subunit (1173 aa).

2 disordered regions span residues 554 to 625 (PSLP…SASG) and 1123 to 1144 (EGPG…PPRK). Residues 564–578 (GGDGAGLEGGDGGTA) are compositionally biased toward gly residues. Residues 591 to 606 (DGEDEDDPEGGDEGEN) are compositionally biased toward acidic residues. Basic and acidic residues predominate over residues 607-618 (GECRENGLEKEG). The segment covering 1123–1138 (EGPGRGEGLGVGGGEG) has biased composition (gly residues).

It belongs to the DNA polymerase type-B family.

It localises to the host nucleus. The enzyme catalyses DNA(n) + a 2'-deoxyribonucleoside 5'-triphosphate = DNA(n+1) + diphosphate. The sequence is that of DNA polymerase catalytic subunit (UL54) from Rattus.